The chain runs to 83 residues: Putative potassium channel toxin Ts20 (83 aa).

A signal peptide spans 1 to 18 (MKLDIVLIMFVTFSTTLA).

Post-translationally, contains 3 disulfide bonds. Expressed by the venom gland.

It is found in the secreted. Functionally, reversibly inhibits potassium channels. This chain is Putative potassium channel toxin Ts20, found in Tityus serrulatus (Brazilian scorpion).